We begin with the raw amino-acid sequence, 155 residues long: Large ribosomal subunit protein eL19 (155 aa).

A compositionally biased stretch (basic residues) spans 66–84 (VRHLQRRKGRRRGMGRRKG). The segment at 66-85 (VRHLQRRKGRRRGMGRRKGV) is disordered.

The protein belongs to the eukaryotic ribosomal protein eL19 family. In terms of assembly, part of the 50S ribosomal subunit.

Binds to the 23S rRNA. This chain is Large ribosomal subunit protein eL19, found in Aeropyrum pernix (strain ATCC 700893 / DSM 11879 / JCM 9820 / NBRC 100138 / K1).